A 181-amino-acid chain; its full sequence is NAD(P)H-quinone oxidoreductase subunit I, chloroplastic (181 aa).

2 4Fe-4S ferredoxin-type domains span residues 55–84 and 95–124; these read GRIH…VDWE and KSYS…MTEE. [4Fe-4S] cluster is bound by residues cysteine 64, cysteine 67, cysteine 70, cysteine 74, cysteine 104, cysteine 107, cysteine 110, and cysteine 114.

This sequence belongs to the complex I 23 kDa subunit family. In terms of assembly, NDH is composed of at least 16 different subunits, 5 of which are encoded in the nucleus. [4Fe-4S] cluster is required as a cofactor.

It localises to the plastid. The protein resides in the chloroplast thylakoid membrane. It catalyses the reaction a plastoquinone + NADH + (n+1) H(+)(in) = a plastoquinol + NAD(+) + n H(+)(out). The catalysed reaction is a plastoquinone + NADPH + (n+1) H(+)(in) = a plastoquinol + NADP(+) + n H(+)(out). NDH shuttles electrons from NAD(P)H:plastoquinone, via FMN and iron-sulfur (Fe-S) centers, to quinones in the photosynthetic chain and possibly in a chloroplast respiratory chain. The immediate electron acceptor for the enzyme in this species is believed to be plastoquinone. Couples the redox reaction to proton translocation, and thus conserves the redox energy in a proton gradient. This is NAD(P)H-quinone oxidoreductase subunit I, chloroplastic from Physcomitrium patens (Spreading-leaved earth moss).